A 314-amino-acid polypeptide reads, in one-letter code: MEFKHTSVLLHETIDNLAPQSGGTYVDATFGGGGHARYLLRKLDKGNLIGFDQDQYAIDTAQSNFAAFLKEDSQPRLQLVHNNFSHLKEELAKLGISGIDGIYYDLGVSSPQLDQAERGFSYRFDARLDMRMDQSQDFDAYQLVNQYDQKQLADVLYRYGDEKFSRQIARKIVERRRGKPIETTFELVEIIKEAIPAAARRRGGHPAKKSFQAIRVEVNHELDVLRASLEEAISLLNPGGRISVITFQSLEDKIVKQTFKKYSEVEIPRGMPVVPEGIKPTLRLVNRKSITASEEELAENNRSHSAKLRVAEKL.

Residues 33-35 (GGH), Asp52, Phe84, Asp105, and Gln112 contribute to the S-adenosyl-L-methionine site.

The protein belongs to the methyltransferase superfamily. RsmH family.

Its subcellular location is the cytoplasm. The enzyme catalyses cytidine(1402) in 16S rRNA + S-adenosyl-L-methionine = N(4)-methylcytidine(1402) in 16S rRNA + S-adenosyl-L-homocysteine + H(+). Its function is as follows. Specifically methylates the N4 position of cytidine in position 1402 (C1402) of 16S rRNA. This chain is Ribosomal RNA small subunit methyltransferase H, found in Lactobacillus delbrueckii subsp. bulgaricus (strain ATCC 11842 / DSM 20081 / BCRC 10696 / JCM 1002 / NBRC 13953 / NCIMB 11778 / NCTC 12712 / WDCM 00102 / Lb 14).